The primary structure comprises 139 residues: Actin-depolymerizing factor 4 (139 aa).

The ADF-H domain occupies 5–139; the sequence is SSGVAIHDDC…SLDALKDRVK (135 aa).

This sequence belongs to the actin-binding proteins ADF family. Interacts with LECRK1 (via kinase domain).

Its subcellular location is the cytoplasm. The protein localises to the cytoskeleton. In terms of biological role, actin-depolymerizing protein. Severs actin filaments (F-actin) and binds to actin monomers. Involved in innate immunity. Required for the expression of defense-related genes PR1A, LOX2 and CHS1 upon biotic stresses. Required for basal resistance to the fungal blast (Magnaporthe grisea), bacterial blight (Xanthomonas oryzae pv. oryzae, Xoo) and the herbivorous insect brown planthopper (Nilaparvata lugens, BPH). Involved in the promotion of seed germination. Required for the expression of alpha-amylase genes during seed germination. The chain is Actin-depolymerizing factor 4 (ADF4) from Oryza sativa subsp. japonica (Rice).